The chain runs to 347 residues: Selenide, water dikinase (347 aa).

Residue Cys17 is part of the active site. Residues Lys20 and 48–50 (TRD) contribute to the ATP site. Position 51 (Asp51) interacts with Mg(2+). Residues Asp68, Asp91, and 139–141 (GHS) contribute to the ATP site. Asp91 lines the Mg(2+) pocket. Asp227 serves as a coordination point for Mg(2+).

Belongs to the selenophosphate synthase 1 family. Class I subfamily. Homodimer. Mg(2+) is required as a cofactor.

The enzyme catalyses hydrogenselenide + ATP + H2O = selenophosphate + AMP + phosphate + 2 H(+). In terms of biological role, synthesizes selenophosphate from selenide and ATP. In Shigella flexneri serotype 5b (strain 8401), this protein is Selenide, water dikinase.